Here is a 619-residue protein sequence, read N- to C-terminus: ATP-dependent RNA helicase DBP8 (619 aa).

The interval M1 to S149 is disordered. A compositionally biased stretch (acidic residues) spans E46–E67. Residues S68–A78 are compositionally biased toward low complexity. Residues L93–E105 show a composition bias toward acidic residues. Residues P137–K147 show a composition bias toward polar residues. The Q motif motif lies at V152 to A180. Residues V183–R356 enclose the Helicase ATP-binding domain. Residue A196–T203 participates in ATP binding. Positions D304 to D307 match the DEAD box motif. The interval E414–P436 is disordered. The Helicase C-terminal domain maps to K430–L572.

Belongs to the DEAD box helicase family. DDX49/DBP8 subfamily.

It is found in the nucleus. The protein resides in the nucleolus. The enzyme catalyses ATP + H2O = ADP + phosphate + H(+). ATP-binding RNA helicase involved in 40S ribosomal subunit biogenesis and is required for the normal formation of 18S rRNAs through pre-rRNA processing at A0, A1 and A2 sites. Required for vegetative growth. This chain is ATP-dependent RNA helicase DBP8 (DBP8), found in Cryptococcus neoformans var. neoformans serotype D (strain B-3501A) (Filobasidiella neoformans).